The sequence spans 406 residues: Tryptophan 2,3-dioxygenase (406 aa).

Residues 72-76 (FIVTH) and R144 contribute to the substrate site. Residue H328 participates in heme binding. T342 provides a ligand contact to substrate.

Belongs to the tryptophan 2,3-dioxygenase family. As to quaternary structure, homotetramer. Dimer of dimers. It depends on heme as a cofactor.

The enzyme catalyses L-tryptophan + O2 = N-formyl-L-kynurenine. Its pathway is amino-acid degradation; L-tryptophan degradation via kynurenine pathway; L-kynurenine from L-tryptophan: step 1/2. Its function is as follows. Heme-dependent dioxygenase that catalyzes the oxidative cleavage of the L-tryptophan (L-Trp) pyrrole ring and converts L-tryptophan to N-formyl-L-kynurenine. Catalyzes the oxidative cleavage of the indole moiety. The sequence is that of Tryptophan 2,3-dioxygenase from Xenopus laevis (African clawed frog).